The primary structure comprises 346 residues: Putative glycosyltransferase HI_0523 (346 aa).

The protein belongs to the glycosyltransferase 9 family.

The polypeptide is Putative glycosyltransferase HI_0523 (Haemophilus influenzae (strain ATCC 51907 / DSM 11121 / KW20 / Rd)).